Consider the following 511-residue polypeptide: GMP synthase [glutamine-hydrolyzing] (511 aa).

The Glutamine amidotransferase type-1 domain maps to 5 to 195 (MILVLDFGGQ…LYNICGCKGD (191 aa)). The active-site Nucleophile is Cys-82. Active-site residues include His-169 and Glu-171. One can recognise a GMPS ATP-PPase domain in the interval 196-386 (WKMSSFVENS…LGIPEDLVWR (191 aa)). 223–229 (SGGVDSS) is a binding site for ATP.

Homodimer.

The enzyme catalyses XMP + L-glutamine + ATP + H2O = GMP + L-glutamate + AMP + diphosphate + 2 H(+). It participates in purine metabolism; GMP biosynthesis; GMP from XMP (L-Gln route): step 1/1. Catalyzes the synthesis of GMP from XMP. The sequence is that of GMP synthase [glutamine-hydrolyzing] from Ruminiclostridium cellulolyticum (strain ATCC 35319 / DSM 5812 / JCM 6584 / H10) (Clostridium cellulolyticum).